Reading from the N-terminus, the 1066-residue chain is Protein sts5 (1066 aa).

The segment covering 18–28 (QQDPSDAQSSP) has biased composition (low complexity). Disordered stretches follow at residues 18-40 (QQDP…SLTT), 154-178 (ATST…SPNS), and 247-286 (SNFR…RKNL). A compositionally biased stretch (polar residues) spans 29-40 (TFVPSANPSLTT). The residue at position 157 (Thr-157) is a Phosphothreonine. A compositionally biased stretch (low complexity) spans 168 to 178 (HSVASVSSPNS). Thr-262 is subject to Phosphothreonine. Residue Ser-264 is modified to Phosphoserine. Residues 270 to 280 (SGSGFSSGGSG) are compositionally biased toward gly residues. The residue at position 377 (Thr-377) is a Phosphothreonine. A disordered region spans residues 454 to 480 (SSAANKERQTSSGNQGSSNNSGNDKPK). The span at 464 to 476 (SSGNQGSSNNSGN) shows a compositional bias: low complexity. The region spanning 482–556 (VWFKPSDKRV…AQVSALLHDT (75 aa)) is the CSD2 domain. In terms of domain architecture, RNB spans 618-934 (NINSSSATDF…VHYQLQLLLR (317 aa)). Positions 983–1033 (QDGLVCFVAPSYFDVFFPSLGMEKRVHLDLLNLTHVRFEEDQGILSLYDES) constitute a DIS3L2 C-terminal domain.

Belongs to the RNR ribonuclease family. Interacts with serine/threonine phosphatase ppe1, protein kinase C and an osmosensing MAP kinase.

The protein resides in the cytoplasm. Functionally, required for the maintenance of cell shape during interphase. Required for localization of cortical actin to the growing tips before mitosis. This Schizosaccharomyces pombe (strain 972 / ATCC 24843) (Fission yeast) protein is Protein sts5 (sts5).